A 222-amino-acid chain; its full sequence is Putative ankyrin repeat protein L36 (222 aa).

ANK repeat units lie at residues Met1 to Ala14, Gln15 to Ala44, Asn45 to Ala74, Glu76 to Glu104, Tyr105 to Asp134, Ala136 to Cys161, and Ser163 to Lys191.

This is Putative ankyrin repeat protein L36 from Acanthamoeba polyphaga (Amoeba).